An 878-amino-acid polypeptide reads, in one-letter code: Alanine--tRNA ligase (878 aa).

4 residues coordinate Zn(2+): H567, H571, C669, and H673.

The protein belongs to the class-II aminoacyl-tRNA synthetase family. Zn(2+) serves as cofactor.

It localises to the cytoplasm. The enzyme catalyses tRNA(Ala) + L-alanine + ATP = L-alanyl-tRNA(Ala) + AMP + diphosphate. Functionally, catalyzes the attachment of alanine to tRNA(Ala) in a two-step reaction: alanine is first activated by ATP to form Ala-AMP and then transferred to the acceptor end of tRNA(Ala). Also edits incorrectly charged Ser-tRNA(Ala) and Gly-tRNA(Ala) via its editing domain. The protein is Alanine--tRNA ligase of Rickettsia conorii (strain ATCC VR-613 / Malish 7).